The sequence spans 433 residues: Histidinol dehydrogenase (433 aa).

The NAD(+) site is built by Tyr-133, Gln-194, and Asn-217. Substrate-binding residues include Ser-240, Gln-262, and His-265. Zn(2+)-binding residues include Gln-262 and His-265. Catalysis depends on proton acceptor residues Glu-330 and His-331. Substrate is bound by residues His-331, Asp-364, Glu-418, and His-423. Residue Asp-364 participates in Zn(2+) binding. Zn(2+) is bound at residue His-423.

Belongs to the histidinol dehydrogenase family. The cofactor is Zn(2+).

It catalyses the reaction L-histidinol + 2 NAD(+) + H2O = L-histidine + 2 NADH + 3 H(+). Its pathway is amino-acid biosynthesis; L-histidine biosynthesis; L-histidine from 5-phospho-alpha-D-ribose 1-diphosphate: step 9/9. Catalyzes the sequential NAD-dependent oxidations of L-histidinol to L-histidinaldehyde and then to L-histidine. The protein is Histidinol dehydrogenase of Dechloromonas aromatica (strain RCB).